Reading from the N-terminus, the 209-residue chain is Uracil phosphoribosyltransferase (209 aa).

5-phospho-alpha-D-ribose 1-diphosphate is bound by residues arginine 79, arginine 104, and aspartate 131–serine 139. Residues isoleucine 194 and glycine 199–alanine 201 each bind uracil. A 5-phospho-alpha-D-ribose 1-diphosphate-binding site is contributed by aspartate 200.

Belongs to the UPRTase family. It depends on Mg(2+) as a cofactor.

It catalyses the reaction UMP + diphosphate = 5-phospho-alpha-D-ribose 1-diphosphate + uracil. Its pathway is pyrimidine metabolism; UMP biosynthesis via salvage pathway; UMP from uracil: step 1/1. Its activity is regulated as follows. Allosterically activated by GTP. Catalyzes the conversion of uracil and 5-phospho-alpha-D-ribose 1-diphosphate (PRPP) to UMP and diphosphate. In Mesorhizobium japonicum (strain LMG 29417 / CECT 9101 / MAFF 303099) (Mesorhizobium loti (strain MAFF 303099)), this protein is Uracil phosphoribosyltransferase.